The chain runs to 1360 residues: Probable inactive protein kinase DDB_G0270444 (1360 aa).

4 WD repeats span residues 44-83 (SSKRPITFVIYDEEGNQFITGEDDFFIRLYNEDGTYIKQL), 109-152 (IRNI…AVYN), 166-205 (TTSAGITALTFDPTNLLVISGTSDGIVRKHSLRERVIMGT), and 208-247 (GHSRGAILNLLLTKHGHLLSSSMDRTIRLWDIDSGKQITG). The Protein kinase domain maps to 636–954 (EKSIQTYLSN…IEQALSHPFI (319 aa)). Low complexity predominate over residues 959-979 (KQQQQQQQQKQQQQQQQQQQQ). Disordered regions lie at residues 959-989 (KQQQQQQQQKQQQQQQQQQQQEIIPKDDSLT), 1258-1311 (IISE…VEEE), and 1331-1360 (EVEEEIEVEEEIEVEEEIQVEDDTDKSNDF). Coiled coils occupy residues 1014–1269 (SKIK…QEGE) and 1297–1352 (NASD…QVED). The segment covering 1291–1300 (LERDNKNASD) has biased composition (basic and acidic residues). 2 stretches are compositionally biased toward acidic residues: residues 1301 to 1311 (HDDEQQFVEEE) and 1331 to 1354 (EVEEEIEVEEEIEVEEEIQVEDDT).

Belongs to the protein kinase superfamily. CMGC Ser/Thr protein kinase family.

The protein is Probable inactive protein kinase DDB_G0270444 of Dictyostelium discoideum (Social amoeba).